The sequence spans 89 residues: Small ribosomal subunit protein uS19 (89 aa).

This sequence belongs to the universal ribosomal protein uS19 family.

In terms of biological role, protein S19 forms a complex with S13 that binds strongly to the 16S ribosomal RNA. This is Small ribosomal subunit protein uS19 from Xylella fastidiosa (strain M12).